Reading from the N-terminus, the 460-residue chain is Exodeoxyribonuclease 7 large subunit (460 aa).

A disordered region spans residues 438–460; it reads ARVEKVNREEEKQSGSQKNGTRD. Positions 439-450 are enriched in basic and acidic residues; that stretch reads RVEKVNREEEKQ. Positions 451–460 are enriched in polar residues; it reads SGSQKNGTRD.

Belongs to the XseA family. As to quaternary structure, heterooligomer composed of large and small subunits.

It is found in the cytoplasm. It carries out the reaction Exonucleolytic cleavage in either 5'- to 3'- or 3'- to 5'-direction to yield nucleoside 5'-phosphates.. Bidirectionally degrades single-stranded DNA into large acid-insoluble oligonucleotides, which are then degraded further into small acid-soluble oligonucleotides. This is Exodeoxyribonuclease 7 large subunit from Brevibacillus brevis (strain 47 / JCM 6285 / NBRC 100599).